Consider the following 445-residue polypeptide: Glutamate-1-semialdehyde 2,1-aminomutase (445 aa).

Lysine 263 bears the N6-(pyridoxal phosphate)lysine mark.

It belongs to the class-III pyridoxal-phosphate-dependent aminotransferase family. HemL subfamily. The cofactor is pyridoxal 5'-phosphate.

It localises to the cytoplasm. The catalysed reaction is (S)-4-amino-5-oxopentanoate = 5-aminolevulinate. It participates in porphyrin-containing compound metabolism; protoporphyrin-IX biosynthesis; 5-aminolevulinate from L-glutamyl-tRNA(Glu): step 2/2. This Haloarcula marismortui (strain ATCC 43049 / DSM 3752 / JCM 8966 / VKM B-1809) (Halobacterium marismortui) protein is Glutamate-1-semialdehyde 2,1-aminomutase.